The sequence spans 208 residues: UPF0319 protein VSAL_I2129 (208 aa).

A signal peptide spans 1–21; the sequence is MKFHSFLAAGLCLLTSLSASA.

The protein belongs to the UPF0319 family.

The polypeptide is UPF0319 protein VSAL_I2129 (Aliivibrio salmonicida (strain LFI1238) (Vibrio salmonicida (strain LFI1238))).